Here is a 731-residue protein sequence, read N- to C-terminus: Lanosterol synthase ERG7 (731 aa).

Threonine 2 carries the N-acetylthreonine modification. A PFTB 1 repeat occupies 125–167 (RIELIRYIVNTAHPVDGGWGLHSVDKSTVFGTVLNYVILRLLG). Aspartate 456 functions as the Proton donor in the catalytic mechanism. Residues 615–661 (VRKGCDFLVSKQMKDGGWGESMKSSELHSYVDSEKSLVVQTAWALIA) form a PFTB 2 repeat.

This sequence belongs to the terpene cyclase/mutase family.

Its subcellular location is the lipid droplet. It localises to the endoplasmic reticulum membrane. It catalyses the reaction (S)-2,3-epoxysqualene = lanosterol. Its pathway is terpene metabolism; lanosterol biosynthesis; lanosterol from farnesyl diphosphate: step 3/3. Catalytic activity requires the presence of ERG27. Its function is as follows. Lanosterol synthase; part of the third module of ergosterol biosynthesis pathway that includes the late steps of the pathway. ERG7 catalyzes the cyclization of (S)-2,3 oxidosqualene to lanosterol, a reaction that forms the sterol core. The third module or late pathway involves the ergosterol synthesis itself through consecutive reactions that mainly occur in the endoplasmic reticulum (ER) membrane. Firstly, the squalene synthase ERG9 catalyzes the condensation of 2 farnesyl pyrophosphate moieties to form squalene, which is the precursor of all steroids. Squalene synthase is crucial for balancing the incorporation of farnesyl diphosphate (FPP) into sterol and nonsterol isoprene synthesis. Secondly, the squalene epoxidase ERG1 catalyzes the stereospecific oxidation of squalene to (S)-2,3-epoxysqualene, which is considered to be a rate-limiting enzyme in steroid biosynthesis. Then, the lanosterol synthase ERG7 catalyzes the cyclization of (S)-2,3 oxidosqualene to lanosterol, a reaction that forms the sterol core. In the next steps, lanosterol is transformed to zymosterol through a complex process involving various demethylation, reduction and desaturation reactions. The lanosterol 14-alpha-demethylase ERG11 (also known as CYP51) catalyzes C14-demethylation of lanosterol to produce 4,4'-dimethyl cholesta-8,14,24-triene-3-beta-ol, which is critical for ergosterol biosynthesis. The C-14 reductase ERG24 reduces the C14=C15 double bond of 4,4-dimethyl-cholesta-8,14,24-trienol to produce 4,4-dimethyl-cholesta-8,24-dienol. 4,4-dimethyl-cholesta-8,24-dienol is substrate of the C-4 demethylation complex ERG25-ERG26-ERG27 in which ERG25 catalyzes the three-step monooxygenation required for the demethylation of 4,4-dimethyl and 4alpha-methylsterols, ERG26 catalyzes the oxidative decarboxylation that results in a reduction of the 3-beta-hydroxy group at the C-3 carbon to an oxo group, and ERG27 is responsible for the reduction of the keto group on the C-3. ERG28 has a role as a scaffold to help anchor ERG25, ERG26 and ERG27 to the endoplasmic reticulum and ERG29 regulates the activity of the iron-containing C4-methylsterol oxidase ERG25. Then, the sterol 24-C-methyltransferase ERG6 catalyzes the methyl transfer from S-adenosyl-methionine to the C-24 of zymosterol to form fecosterol. The C-8 sterol isomerase ERG2 catalyzes the reaction which results in unsaturation at C-7 in the B ring of sterols and thus converts fecosterol to episterol. The sterol-C5-desaturase ERG3 then catalyzes the introduction of a C-5 double bond in the B ring to produce 5-dehydroepisterol. The C-22 sterol desaturase ERG5 further converts 5-dehydroepisterol into ergosta-5,7,22,24(28)-tetraen-3beta-ol by forming the C-22(23) double bond in the sterol side chain. Finally, ergosta-5,7,22,24(28)-tetraen-3beta-ol is substrate of the C-24(28) sterol reductase ERG4 to produce ergosterol. This Saccharomyces cerevisiae (strain ATCC 204508 / S288c) (Baker's yeast) protein is Lanosterol synthase ERG7.